A 146-amino-acid polypeptide reads, in one-letter code: MADPEKIIKVSVVTPDGIVYSHNATMVAMRAIDGDRAIMYDHLPIVTPLAIGEVRVKRTHEMNDRIDHIAVNGGYIEFSNNEATIIADSAERARNIDVKRAQSAKKRAEQHMQEAKEKHNEREMLEAEIALRRAVNRLHVRENYGK.

Positions 103–122 are disordered; it reads SAKKRAEQHMQEAKEKHNER.

This sequence belongs to the ATPase epsilon chain family. As to quaternary structure, F-type ATPases have 2 components, CF(1) - the catalytic core - and CF(0) - the membrane proton channel. CF(1) has five subunits: alpha(3), beta(3), gamma(1), delta(1), epsilon(1). CF(0) has three main subunits: a, b and c.

Its subcellular location is the cell membrane. Produces ATP from ADP in the presence of a proton gradient across the membrane. This is ATP synthase epsilon chain from Lactobacillus johnsonii (strain CNCM I-12250 / La1 / NCC 533).